The chain runs to 256 residues: Putative ankyrin repeat protein PAE1861 (256 aa).

8 ANK repeats span residues 1–30, 34–63, 67–92, 93–122, 124–151, 155–184, 188–214, and 218–245; these read MDCNNLLNAARRGEAELLTRLLNEGCSPDV, YGRTPLYYAAERGDVGTVDLLIKAGADPNA, EGKTPIIIATQSRKFGVIPLLSASAV, GVEEALYTAARNGCHKAVRYMLARGVRPGA, HGESLLHLVAGDAGLVKLLLEYGVDPNA, HGKTPLHMASEHNCAQCVELLLKRGPDVNV, AGRTPLHYADDVDCIKLLLRYGADLNA, and MGRTPLHYAEDGLAAEALLKRGARPVPD.

The sequence is that of Putative ankyrin repeat protein PAE1861 from Pyrobaculum aerophilum (strain ATCC 51768 / DSM 7523 / JCM 9630 / CIP 104966 / NBRC 100827 / IM2).